Reading from the N-terminus, the 130-residue chain is MPIKLKGKIVSGLGVGAKYVQLYRGVFNKYLGIDPYPGTLNIDIGQDFFIYTKKLKAKIIPPPRKGLGCVLAYPGILMGIKIYVIKPCITNHGRNILEIISDKNLRKTLNLKDNDIVEIIIYDEEDYSYI.

12-17 (GLGVGA) is a binding site for CDP. Mg(2+) is bound by residues Thr39 and Asn41. Positions 90 and 98 each coordinate FMN. Position 103 to 106 (103 to 106 (KNLR)) interacts with CDP.

The protein belongs to the archaeal riboflavin kinase family. Mg(2+) serves as cofactor.

It carries out the reaction riboflavin + CTP = CDP + FMN + H(+). It functions in the pathway cofactor biosynthesis; FMN biosynthesis; FMN from riboflavin (CTP route): step 1/1. Catalyzes the CTP-dependent phosphorylation of riboflavin (vitamin B2) to form flavin mononucleotide (FMN). In Staphylothermus marinus (strain ATCC 43588 / DSM 3639 / JCM 9404 / F1), this protein is Riboflavin kinase.